The sequence spans 375 residues: Glutamate 5-kinase (375 aa).

Lysine 17 serves as a coordination point for ATP. Serine 57, aspartate 144, and asparagine 156 together coordinate substrate. Threonine 176 to aspartate 177 contributes to the ATP binding site. A PUA domain is found at lysine 283–valine 361.

This sequence belongs to the glutamate 5-kinase family.

The protein localises to the cytoplasm. The catalysed reaction is L-glutamate + ATP = L-glutamyl 5-phosphate + ADP. It participates in amino-acid biosynthesis; L-proline biosynthesis; L-glutamate 5-semialdehyde from L-glutamate: step 1/2. In terms of biological role, catalyzes the transfer of a phosphate group to glutamate to form L-glutamate 5-phosphate. The polypeptide is Glutamate 5-kinase (Nitrosococcus oceani (strain ATCC 19707 / BCRC 17464 / JCM 30415 / NCIMB 11848 / C-107)).